Consider the following 61-residue polypeptide: Small ribosomal subunit protein uS14 (61 aa).

Zn(2+) contacts are provided by Cys-24, Cys-27, Cys-40, and Cys-43.

Belongs to the universal ribosomal protein uS14 family. Zinc-binding uS14 subfamily. As to quaternary structure, part of the 30S ribosomal subunit. Contacts proteins S3 and S10. Requires Zn(2+) as cofactor.

In terms of biological role, binds 16S rRNA, required for the assembly of 30S particles and may also be responsible for determining the conformation of the 16S rRNA at the A site. The protein is Small ribosomal subunit protein uS14 of Mesomycoplasma hyopneumoniae (strain 232) (Mycoplasma hyopneumoniae).